A 246-amino-acid chain; its full sequence is Transcription factor A, mitochondrial (246 aa).

The transit peptide at 1–42 (MALLRGVWGVLNALGKSGADLCAGCGSRLRYPFSFAYVPKWF) directs the protein to the mitochondrion. The HMG box 1 DNA-binding region spans 50-118 (PKKPMTSYVR…VYKEEINRIQ (69 aa)). 2 positions are modified to phosphoserine; by PKA: S56 and S61. T122 carries the phosphothreonine modification. The segment at residues 155 to 219 (PKRPRSAYNI…RYYNEMKSWE (65 aa)) is a DNA-binding region (HMG box 2). A Phosphoserine; by PKA modification is found at S160. Phosphoserine occurs at positions 193 and 195.

In terms of assembly, monomer; binds DNA as a monomer. Homodimer. Component of the mitochondrial transcription initiation complex, composed at least of TFB2M, TFAM and POLRMT. In this complex TFAM recruits POLRMT to the promoter whereas TFB2M induces structural changes in POLRMT to enable promoter opening and trapping of the DNA non-template strand. Upon metabolic stress, forms a complex composed of FOXO3, SIRT3, TFAM and POLRMT. Interacts with TFB1M and TFB2M. Interacts with CLPX; this enhances DNA-binding. In terms of processing, phosphorylation by PKA within the HMG box 1 impairs DNA binding and promotes degradation by the AAA+ Lon protease.

Its subcellular location is the mitochondrion. It localises to the mitochondrion matrix. The protein localises to the mitochondrion nucleoid. Functionally, binds to the mitochondrial light strand promoter and functions in mitochondrial transcription regulation. Component of the mitochondrial transcription initiation complex, composed at least of TFB2M, TFAM and POLRMT that is required for basal transcription of mitochondrial DNA. In this complex, TFAM recruits POLRMT to a specific promoter whereas TFB2M induces structural changes in POLRMT to enable promoter opening and trapping of the DNA non-template strand. Required for accurate and efficient promoter recognition by the mitochondrial RNA polymerase. Promotes transcription initiation from the HSP1 and the light strand promoter by binding immediately upstream of transcriptional start sites. Is able to unwind DNA. Bends the mitochondrial light strand promoter DNA into a U-turn shape via its HMG boxes. Required for maintenance of normal levels of mitochondrial DNA. May play a role in organizing and compacting mitochondrial DNA. This chain is Transcription factor A, mitochondrial, found in Bos taurus (Bovine).